Consider the following 131-residue polypeptide: Ribosome-binding factor A (131 aa).

It belongs to the RbfA family. Monomer. Binds 30S ribosomal subunits, but not 50S ribosomal subunits or 70S ribosomes.

The protein localises to the cytoplasm. Its function is as follows. One of several proteins that assist in the late maturation steps of the functional core of the 30S ribosomal subunit. Associates with free 30S ribosomal subunits (but not with 30S subunits that are part of 70S ribosomes or polysomes). Required for efficient processing of 16S rRNA. May interact with the 5'-terminal helix region of 16S rRNA. The chain is Ribosome-binding factor A from Christiangramia forsetii (strain DSM 17595 / CGMCC 1.15422 / KT0803) (Gramella forsetii).